The primary structure comprises 518 residues: Homoserine O-acetyltransferase (518 aa).

One can recognise an AB hydrolase-1 domain in the interval 69-468 (NVMVICHALT…DSPEGHDAFL (400 aa)). Serine 182 is a catalytic residue. The active-site Nucleophile is the serine 182. The interval 267 to 365 (RFGRNIPDPS…PNSVSDPFRP (99 aa)) is disordered. Positions 290–303 (PAEEHYDIHNEGFR) are enriched in basic and acidic residues. Residues 310–341 (RSSTTTSDAPPSPTRTSSTSSTDAITPASTTP) show a composition bias toward low complexity. Residues aspartate 435 and histidine 464 contribute to the active site.

This sequence belongs to the AB hydrolase superfamily. MetX family.

It carries out the reaction L-homoserine + acetyl-CoA = O-acetyl-L-homoserine + CoA. It participates in amino-acid biosynthesis; L-methionine biosynthesis via de novo pathway; O-acetyl-L-homoserine from L-homoserine: step 1/1. Its function is as follows. Commits homoserine to the methionine biosynthesis pathway by catalyzing its O-acetylation. The chain is Homoserine O-acetyltransferase (MET2) from Ascobolus immersus.